A 554-amino-acid polypeptide reads, in one-letter code: (S)-1-hydroxy-N-methylcanadine 13-hydroxylase CYP82X2 (554 aa).

A helical transmembrane segment spans residues 23 to 43 (IISTFIVTIISIVFLYTVLLI). Cysteine 494 is a binding site for heme.

It belongs to the cytochrome P450 family. The cofactor is heme. Highly expressed in capsules. Expressed is stems.

Its subcellular location is the membrane. The catalysed reaction is (S)-1-hydroxy-N-methylcanadine + reduced [NADPH--hemoprotein reductase] + O2 = (13S,14R)-1,13-dihydroxy-N-methylcanadine + oxidized [NADPH--hemoprotein reductase] + H2O + H(+). It functions in the pathway alkaloid biosynthesis. In terms of biological role, cytochrome P450 involved in the biosynthesis of the benzylisoquinoline alkaloid noscapine. Converts (S)-1-hydroxy-N-methylcanadine to (13S,14R)-1,13-dihydroxy-N-methylcanadine. The chain is (S)-1-hydroxy-N-methylcanadine 13-hydroxylase CYP82X2 from Papaver somniferum (Opium poppy).